The following is a 356-amino-acid chain: Protein disulfide isomerase crld-1 (356 aa).

Positions 1–17 are cleaved as a signal peptide; the sequence is MSRILLLLAVLIGATSQ. At 18 to 299 the chain is on the lumenal side; sequence KEVTIKNEKC…DRPFMPIDQQ (282 aa). The CXXC motif lies at 27-30; it reads CRTC. Cys-27 and Cys-30 are disulfide-bonded. The N-linked (GlcNAc...) asparagine glycan is linked to Asn-122. Residues 150-188 enclose the EGF-like 1 domain; sequence GLSEKADVCFGKGSCHGDGSREGSGKCKCETGYTGNLCR. 5 disulfides stabilise this stretch: Cys-158/Cys-176, Cys-178/Cys-187, Cys-245/Cys-258, Cys-251/Cys-267, and Cys-269/Cys-281. Positions 241–282 constitute an EGF-like 2; calcium-binding domain; that stretch reads DVNECQNESACTKEHEICVNTVGSFKCECKEGYKKDDEQNCQ. A glycan (N-linked (GlcNAc...) asparagine) is linked at Asn-247. The chain crosses the membrane as a helical span at residues 300-317; the sequence is LKLIAFSSLIIIITFVVW. Residues 318–321 are Cytoplasmic-facing; the sequence is HGSP. A helical transmembrane segment spans residues 322–341; the sequence is VLYVLTGITIVALILVDLYV. Residues 342-356 lie on the Lumenal side of the membrane; sequence NPDTIPDEAKRFLGY.

Belongs to the CRELD family. In terms of assembly, interacts with unc-29. As to expression, isoforms a: Widely expressed in tissues including body wall muscles, neurons, pharynx, hypodermis, seam cells, intestine and gonad. Isoform b: Widely expressed in tissues including body wall muscles, neurons, pharynx, hypodermis, seam cells, intestine and gonad.

It is found in the endoplasmic reticulum membrane. The protein localises to the endoplasmic reticulum lumen. The catalysed reaction is Catalyzes the rearrangement of -S-S- bonds in proteins.. Its function is as follows. Protein disulfide isomerase which associates with the unc-29 subunit of levamisole-sensitive nicotinic acetylcholine receptors (L-nAChR) to promote L-nAChR assembly in the endoplasmic reticulum at neuromuscular junctions. In terms of biological role, promotes L-nAChR assembly in the endoplasmic reticulum at neuromuscular junctions. The sequence is that of Protein disulfide isomerase crld-1 from Caenorhabditis elegans.